Consider the following 275-residue polypeptide: MALVKTKPTSPGRRFVVKVVHPELHKGDPYAPLVESKNRINSRNNQGRITLRRRGGGHKRNYRIIDFKRDKEGIEGKVERLEYDPNRSAHIALVLYPDGERRYIIAPIGVHKGSKVVSGREAPIRPGNCLPLQNIPLGATIHNIELKPGKGAQLVRSAGASAQLAAKEGIYAIIRMRSGETRKILAVCRACIGEVSNSEHNLRSLGKAGAKRWRGRRPTVRGVAMNPVDHPHGGGEGKTSGGRHPVSPTGKPTKGYKTRRNKRTSNMIIRDRRKK.

Residues Ala-208–Lys-275 form a disordered region. Basic residues-rich tracts occupy residues Gly-209–Thr-219 and Lys-254–Arg-263.

It belongs to the universal ribosomal protein uL2 family. In terms of assembly, part of the 50S ribosomal subunit. Forms a bridge to the 30S subunit in the 70S ribosome.

Functionally, one of the primary rRNA binding proteins. Required for association of the 30S and 50S subunits to form the 70S ribosome, for tRNA binding and peptide bond formation. It has been suggested to have peptidyltransferase activity; this is somewhat controversial. Makes several contacts with the 16S rRNA in the 70S ribosome. The chain is Large ribosomal subunit protein uL2 from Coxiella burnetii (strain CbuK_Q154) (Coxiella burnetii (strain Q154)).